The primary structure comprises 38 residues: Histone H5 (38 aa).

A compositionally biased stretch (pro residues) spans 1-15 (TESPIPVPAPAPAAK). The interval 1 to 38 (TESPIPVPAPAPAAKPKPKRVSKRPASHPPYSDMIAAA) is disordered. Residues 16–26 (PKPKRVSKRPA) show a composition bias toward basic residues.

Belongs to the histone H1/H5 family. As to expression, erythroid cells.

The protein resides in the nucleus. It localises to the chromosome. Histone H5 performs the same function as H1, being necessary for the condensation of nucleosome chains into higher order structures, and replaces histone H1 in certain cells. In Columba livia (Rock dove), this protein is Histone H5.